Consider the following 142-residue polypeptide: Transcription antitermination protein NusB (142 aa).

It belongs to the NusB family.

Its function is as follows. Involved in transcription antitermination. Required for transcription of ribosomal RNA (rRNA) genes. Binds specifically to the boxA antiterminator sequence of the ribosomal RNA (rrn) operons. The polypeptide is Transcription antitermination protein NusB (Borrelia garinii subsp. bavariensis (strain ATCC BAA-2496 / DSM 23469 / PBi) (Borreliella bavariensis)).